Consider the following 650-residue polypeptide: Chaperone protein DnaK (650 aa).

Threonine 200 carries the post-translational modification Phosphothreonine; by autocatalysis. A disordered region spans residues 614-634 (AGAAGAAGAAEGAAHAGGAQQ).

It belongs to the heat shock protein 70 family.

Acts as a chaperone. The polypeptide is Chaperone protein DnaK (Burkholderia cenocepacia (strain ATCC BAA-245 / DSM 16553 / LMG 16656 / NCTC 13227 / J2315 / CF5610) (Burkholderia cepacia (strain J2315))).